The primary structure comprises 285 residues: Tropomyosin alpha-3 chain (285 aa).

Residues 1-285 (MMEAIKKKMQ…DHALNDMTSI (285 aa)) are a coiled coil. Position 2 is an N-acetylmethionine (M2). N-acetylalanine is present on M2. T54 carries the post-translational modification Phosphothreonine. Phosphoserine is present on residues S62 and S88. T109 is modified (phosphothreonine). 2 positions are modified to phosphoserine: S207 and S216. An N6-acetyllysine modification is found at I228. T253 is subject to Phosphothreonine. At Y262 the chain carries Phosphotyrosine. Residue S272 is modified to Phosphoserine. T283 carries the phosphothreonine modification. S284 carries the phosphoserine modification.

The protein belongs to the tropomyosin family. In terms of assembly, homodimer. Heterodimer of an alpha (TPM1, TPM3 or TPM4) and a beta (TPM2) chain. Interacts with TMOD1. Interacts with TNNT1.

The protein resides in the cytoplasm. It localises to the cytoskeleton. In terms of biological role, binds to actin filaments in muscle and non-muscle cells. Plays a central role, in association with the troponin complex, in the calcium dependent regulation of vertebrate striated muscle contraction. Smooth muscle contraction is regulated by interaction with caldesmon. In non-muscle cells is implicated in stabilizing cytoskeleton actin filaments. This Mus musculus (Mouse) protein is Tropomyosin alpha-3 chain (Tpm3).